The primary structure comprises 591 residues: Probable Xaa-Pro aminopeptidase PEPP (591 aa).

Positions 31–59 (SIHSPPPSVSAATHGGVKNPSFSQRRTSG) are disordered. Residues aspartate 322 and aspartate 333 each contribute to the Mn(2+) site. A compositionally biased stretch (low complexity) spans 441–450 (GLSRQAISGS). The interval 441 to 460 (GLSRQAISGSRRLPPPRNMK) is disordered. Mn(2+) is bound by residues glutamate 511 and glutamate 552.

The protein belongs to the peptidase M24B family. Mn(2+) serves as cofactor.

It catalyses the reaction Release of any N-terminal amino acid, including proline, that is linked to proline, even from a dipeptide or tripeptide.. In terms of biological role, catalyzes the removal of a penultimate prolyl residue from the N-termini of peptides. This is Probable Xaa-Pro aminopeptidase PEPP (PEPP) from Sordaria macrospora (strain ATCC MYA-333 / DSM 997 / K(L3346) / K-hell).